A 498-amino-acid chain; its full sequence is Lysine--tRNA ligase (498 aa).

E407 and E414 together coordinate Mg(2+).

The protein belongs to the class-II aminoacyl-tRNA synthetase family. In terms of assembly, homodimer. Mg(2+) is required as a cofactor.

The protein localises to the cytoplasm. The enzyme catalyses tRNA(Lys) + L-lysine + ATP = L-lysyl-tRNA(Lys) + AMP + diphosphate. The chain is Lysine--tRNA ligase from Sinorhizobium medicae (strain WSM419) (Ensifer medicae).